We begin with the raw amino-acid sequence, 249 residues long: Bacillaene synthase decarboxylase PksI (249 aa).

His230 is an active-site residue.

The protein belongs to the enoyl-CoA hydratase/isomerase family. In terms of assembly, homotrimer. Does not form a heterotrimeric complex with PksH.

The protein resides in the cytoplasm. It functions in the pathway antibiotic biosynthesis; bacillaene biosynthesis. Involved in some intermediate steps for the synthesis of the antibiotic polyketide bacillaene which is involved in secondary metabolism. Catalyzes the decarboxylation of the 3-methylglutaconyl group tethered to PksL to a 3-methylcrotonyl moiety. The chain is Bacillaene synthase decarboxylase PksI (pksI) from Bacillus subtilis (strain 168).